The sequence spans 834 residues: MAVEEEGLRVFQSVRIKIGEAKNLPSYPGPNKMRDCYCTVNLDQEEVFRTKIVEKSLCPFYGEDFYCEIPRSFRHLSFYIFDRDVFRRDSIIGKVAIQKEDLQRYHNRDTWFQLQHVDADSEVQGKVHLELRLSEVITDTGVVCHKLAARIFECQGLPIVNGQCDPYATVTLAGPFRSEAKKTKVKKKTNNPQFDEVFYFEVTRPCSYSKKSHFDFEEEDVDKLEIRVDLWNASNLKFGDEFLGELRLPLKILRHSSSYEAWYFLQPRDNGNKSLKPDDLGSLRLNVVYTEDHVFSSEYYSPLRDLLLKSADVEPVSASAAHILGEVCRDKQEAAIPLVRLLLHYGRVVPFISAIASAEVKRTQDPNTIFRGNSLTSKCIDETMKLAGMHYLHVTLKPTIEEICQSHKSCEIDPVKLKDGENLENNMESLRQYVDRIFTVITKSGVSCPTVMCDIFFSLREAAAKRFQDDLDVRYTAVSSFIFLRFFAPAILSPNLFQLTPHHTDPQTSRTLTLISKTIQTLGSLSKSKSASFKESYMATFYEFFNEQKYADAVKNFLDLISSSGRRDPKSIEQPILLKEGFMIKRAQGRKRFGMKNFKKRWFRLTNHEFTYQKSKGDQPLCNIPIENILAVERLEEESFRMKNMFQVIQPERALYIQANNCVEAKDWIDILTKVSQCNQKRLTVFHPSAYLNGHWLCCRASSDTAAGCTPCTGGLPANIQLDIDGDRETERIYSLFNLYMGKLEKMQEACGSKSVYDGPEQEEYSTFVIDDPQETYKTLKQVIAGVGTLEQEHAQYRRDKFKKTRYGSQEHPIGDKSFQNYIRQQSEISTHSI.

C2 domains lie at 1–112 (MAVE…DTWF) and 123–263 (VQGK…EAWY). N-acetylalanine is present on A2. Y66 bears the Phosphotyrosine mark. Residue S77 is modified to Phosphoserine. At T110 the chain carries Phosphothreonine. Residues 346–561 (GRVVPFISAI…DAVKNFLDLI (216 aa)) enclose the Ras-GAP domain. The PH domain occupies 576-677 (ILLKEGFMIK…WIDILTKVSQ (102 aa)). A Btk-type zinc finger spans residues 679–715 (NQKRLTVFHPSAYLNGHWLCCRASSDTAAGCTPCTGG). H687, C698, C699, and C709 together coordinate Zn(2+). S809 and S833 each carry phosphoserine.

High levels in brain, lower in spleen and lung.

In terms of biological role, inhibitory regulator of the Ras-cyclic AMP pathway. May bind inositol tetrakisphosphate (IP4). This is Ras GTPase-activating protein 3 (Rasa3) from Mus musculus (Mouse).